Here is a 209-residue protein sequence, read N- to C-terminus: Imidazole glycerol phosphate synthase subunit HisH (209 aa).

A Glutamine amidotransferase type-1 domain is found at 1–205 (MIAIIDYGMG…KGVVEAWKSS (205 aa)). Cysteine 79 serves as the catalytic Nucleophile. Catalysis depends on residues histidine 180 and glutamate 182.

As to quaternary structure, heterodimer of HisH and HisF.

The protein localises to the cytoplasm. It catalyses the reaction 5-[(5-phospho-1-deoxy-D-ribulos-1-ylimino)methylamino]-1-(5-phospho-beta-D-ribosyl)imidazole-4-carboxamide + L-glutamine = D-erythro-1-(imidazol-4-yl)glycerol 3-phosphate + 5-amino-1-(5-phospho-beta-D-ribosyl)imidazole-4-carboxamide + L-glutamate + H(+). The catalysed reaction is L-glutamine + H2O = L-glutamate + NH4(+). It participates in amino-acid biosynthesis; L-histidine biosynthesis; L-histidine from 5-phospho-alpha-D-ribose 1-diphosphate: step 5/9. In terms of biological role, IGPS catalyzes the conversion of PRFAR and glutamine to IGP, AICAR and glutamate. The HisH subunit catalyzes the hydrolysis of glutamine to glutamate and ammonia as part of the synthesis of IGP and AICAR. The resulting ammonia molecule is channeled to the active site of HisF. This is Imidazole glycerol phosphate synthase subunit HisH from Bacillus mycoides (strain KBAB4) (Bacillus weihenstephanensis).